The chain runs to 165 residues: Large ribosomal subunit protein uL15 (165 aa).

Basic residues predominate over residues 1–29 (MTSKKKRQRGSRTHGGGSHKNRRGAGHRG). Disordered regions lie at residues 1–59 (MTSK…QKVQ) and 133–165 (KVEG…ADEE). Positions 30 to 47 (GRGDAGRDKHEFHNHEPL) are enriched in basic and acidic residues. The segment covering 154-165 (AEETEDADADEE) has biased composition (acidic residues).

Belongs to the universal ribosomal protein uL15 family. As to quaternary structure, part of the 50S ribosomal subunit. Interacts weakly with proteins L18e and L32e.

Binds to the 23S rRNA. This Haloarcula marismortui (strain ATCC 43049 / DSM 3752 / JCM 8966 / VKM B-1809) (Halobacterium marismortui) protein is Large ribosomal subunit protein uL15 (rpl15).